Consider the following 587-residue polypeptide: Complement component C8 beta chain (587 aa).

The signal sequence occupies residues 1-31 (MNHKLKPTVGLGYCLLCAALCLLLLRDVAIA). Positions 32–44 (GSGEEPSGVREAR) are excised as a propeptide. Residues 56–111 (DCVQSEWSSWTRCDVCRKKRYRYAKLVQPSQFGGEPCHVQGKEVEPCSPPSRYDCT) form the TSP type-1 1 domain. 5 disulfide bridges follow: Cys57-Cys92, Cys68-Cys102, Cys71-Cys110, Cys118-Cys129, and Cys123-Cys142. C-linked (Man) tryptophan glycans are attached at residues Trp62 and Trp65. The LDL-receptor class A domain occupies 117–159 (LCEGFLCTYTGRCVPIDLRCNGDDDCGDWSAEKGSPKVPKACK). The Ca(2+) site is built by Leu134, Asn137, Asp139, Asp141, and Glu148. The 347-residue stretch at 154-500 (VPKACKQEAQ…EYLEESSSCR (347 aa)) folds into the MACPF domain. Cysteines 158 and 196 form a disulfide. A run of 4 beta stranded transmembrane segments spans residues 248–255 (TTVSIGFA), 258–265 (GVAEFGFN), 375–382 (EQIVLKVG), and 388–395 (VYVTVGLE). 5 cysteine pairs are disulfide-bonded: Cys374–Cys399, Cys499–Cys546, Cys501–Cys517, Cys504–Cys519, and Cys521–Cys530. In terms of domain architecture, EGF-like spans 501–531 (CAPCRNNGLAVLKGTRCECVCPSGYSGLGCE). The TSP type-1 2 domain occupies 541-587 (DGSWSCWGSWSPCRGRSKTRSRQCNNPAPSSGGIACRGLQMETTDCF). Residues Trp547 and Trp550 are each glycosylated (C-linked (Man) tryptophan). A disulfide bridge connects residues Cys553 and Cys586.

This sequence belongs to the complement C6/C7/C8/C9 family. As to quaternary structure, heterotrimer of 3 chains: alpha (C8A), beta (C8B) and gamma (C8G); the alpha and gamma chains are disulfide bonded. Component of the membrane attack complex (MAC), composed of complement C5b, C6, C7, C8A, C8B, C8G and multiple copies of the pore-forming subunit C9.

The protein resides in the secreted. It localises to the target cell membrane. Its function is as follows. Component of the membrane attack complex (MAC), a multiprotein complex activated by the complement cascade, which inserts into a target cell membrane and forms a pore, leading to target cell membrane rupture and cell lysis. The MAC is initiated by proteolytic cleavage of C5 into complement C5b in response to the classical, alternative, lectin and GZMK complement pathways. The complement pathways consist in a cascade of proteins that leads to phagocytosis and breakdown of pathogens and signaling that strengthens the adaptive immune system. C8B, together with C8A and C8G, inserts into the target membrane, but does not form pores by itself. During MAC assembly, associates with C5b, C6 and C7 to form the C5b8 intermediate complex that inserts into the target membrane and traverses the bilayer increasing membrane rigidity. The sequence is that of Complement component C8 beta chain (c8b) from Oncorhynchus mykiss (Rainbow trout).